The sequence spans 558 residues: Receptor-like kinase LIP2 (558 aa).

The interval 1–45 (MHCFPCFSSPKNKKSSTTNETNDNNEPKPDDRRRAEETEEIEQSE) is disordered. Over residues 15 to 24 (SSTTNETNDN) the composition is skewed to low complexity. Positions 25-36 (NEPKPDDRRRAE) are enriched in basic and acidic residues. Phosphothreonine is present on Thr-53. The region spanning 64–343 (FRQECLLGEG…SDVMVALSFL (280 aa)) is the Protein kinase domain. ATP contacts are provided by residues 70–78 (LGEGGFGRV) and Lys-93. Phosphotyrosine is present on Tyr-138. The Proton acceptor role is filled by Asp-191. Residues Ser-195 and Ser-227 each carry the phosphoserine modification. Thr-233 carries the post-translational modification Phosphothreonine. Phosphotyrosine is present on Tyr-241. Residues 372 to 558 (HDSNLVSPPP…SDVAIDSIKE (187 aa)) form a disordered region. Over residues 401 to 418 (ESEKESVSKNEYKKKHEE) the composition is skewed to basic and acidic residues. Acidic residues predominate over residues 419–431 (EDSSMESDDESDS). Residues 432-448 (NSEHEKDQPPKPIDEKN) show a composition bias toward basic and acidic residues. The span at 473 to 486 (SKSSQKSNDESTSS) shows a compositional bias: low complexity. Basic and acidic residues-rich tracts occupy residues 488 to 500 (YDSD…KGKE), 508 to 524 (EEKH…KTDD), and 547 to 558 (IKSDVAIDSIKE).

This sequence belongs to the protein kinase superfamily. Ser/Thr protein kinase family. Interacts with PRK6. Palmitoylated. Expressed in mature pollen and in germinating pollen tubes.

It is found in the cell membrane. Its function is as follows. Involved in pollen tube guidance into micropyle. Participates in perception of the ovule-secreted peptide signal LURE1. This is Receptor-like kinase LIP2 from Arabidopsis thaliana (Mouse-ear cress).